The sequence spans 91 residues: Small ribosomal subunit protein bS18 (91 aa).

The protein belongs to the bacterial ribosomal protein bS18 family. As to quaternary structure, part of the 30S ribosomal subunit. Forms a tight heterodimer with protein bS6.

Its function is as follows. Binds as a heterodimer with protein bS6 to the central domain of the 16S rRNA, where it helps stabilize the platform of the 30S subunit. The polypeptide is Small ribosomal subunit protein bS18 (Burkholderia vietnamiensis (strain G4 / LMG 22486) (Burkholderia cepacia (strain R1808))).